The sequence spans 94 residues: Small ribosomal subunit protein uS19 (94 aa).

Belongs to the universal ribosomal protein uS19 family.

Its function is as follows. Protein S19 forms a complex with S13 that binds strongly to the 16S ribosomal RNA. The chain is Small ribosomal subunit protein uS19 from Carboxydothermus hydrogenoformans (strain ATCC BAA-161 / DSM 6008 / Z-2901).